The chain runs to 345 residues: Glycosyltransferase 1 domain-containing protein 1 (345 aa).

The signal sequence occupies residues 1 to 19; the sequence is MKILFLACLRAHTGNSTTA. N-linked (GlcNAc...) asparagine glycosylation is found at N246 and N322.

The protein belongs to the glycosyltransferase group 1 family. Glycosyltransferase 4 subfamily.

Its subcellular location is the secreted. This Xenopus tropicalis (Western clawed frog) protein is Glycosyltransferase 1 domain-containing protein 1 (glt1d1).